Consider the following 81-residue polypeptide: Short neurotoxin 2 (81 aa).

A signal peptide spans 1–21 (MKTLLLTLVVVTIVCLDLGYT). Intrachain disulfides connect C24–C43, C38–C60, C62–C73, and C74–C79.

It belongs to the three-finger toxin family. Short-chain subfamily. Type I alpha-neurotoxin sub-subfamily. In terms of tissue distribution, expressed by the venom gland.

It localises to the secreted. Functionally, binds to muscle nicotinic acetylcholine receptor (nAChR) and inhibit acetylcholine from binding to the receptor, thereby impairing neuromuscular transmission. This Drysdalia coronoides (White-lipped snake) protein is Short neurotoxin 2.